The primary structure comprises 169 residues: Queuosine precursor transporter QueT (169 aa).

5 helical membrane-spanning segments follow: residues 9–29 (IVTIAIVAALYVILTMTPGLS), 44–64 (LNFTAFFNKKYIIAVTIGCMI), 73–93 (VDVIVGGLSTLVFLSLGVLLF), 110–130 (FFFFAIFFSISMFTIALELKF), and 137–157 (LLTWGTLALGEFASLFIGAFI).

Belongs to the vitamin uptake transporter (VUT/ECF) (TC 2.A.88) family. In terms of assembly, in E.coli forms a stable energy-coupling factor (ECF) transporter complex composed of 2 membrane-embedded substrate-binding protein (S component), 2 ATP-binding proteins (A and A' components) and 2 transmembrane proteins (T component), probably with a stoichiometry of 2:1:1:2. May be able to interact with more than 1 S component at a time.

It is found in the cell membrane. Probably a queuosine precursor-binding protein that interacts with the energy-coupling factor (ECF) ABC-transporter complex. Unlike classic ABC transporters this ECF transporter provides the energy necessary to transport a number of different substrates. The substrates themselves are bound by transmembrane, not extracytoplasmic soluble proteins. The polypeptide is Queuosine precursor transporter QueT (queT) (Lactococcus lactis subsp. cremoris (strain MG1363)).